We begin with the raw amino-acid sequence, 209 residues long: FK506-binding protein 2B (209 aa).

Positions 1 to 19 (MRFSLLALLGTIVATSVSA) are cleaved as a signal peptide. Residues 47–136 (GDELSMHYTG…VFEVELLEIK (90 aa)) enclose the PPIase FKBP-type domain. A helical membrane pass occupies residues 157–177 (FTSPSFLVSTGIIVALFLIVF). Residues 178 to 207 (KMAKKQDIAEANEKAAAATAEASTEKKEEK) adopt a coiled-coil conformation. A disordered region spans residues 190–209 (EKAAAATAEASTEKKEEKKE). The segment covering 200–209 (STEKKEEKKE) has biased composition (basic and acidic residues).

This sequence belongs to the FKBP-type PPIase family. FKBP2 subfamily.

The protein localises to the membrane. It carries out the reaction [protein]-peptidylproline (omega=180) = [protein]-peptidylproline (omega=0). With respect to regulation, inhibited by both FK506 and rapamycin. In terms of biological role, PPIases accelerate the folding of proteins. It catalyzes the cis-trans isomerization of proline imidic peptide bonds in oligopeptides. In Rhizopus delemar (strain RA 99-880 / ATCC MYA-4621 / FGSC 9543 / NRRL 43880) (Mucormycosis agent), this protein is FK506-binding protein 2B (FKBP3).